Here is a 425-residue protein sequence, read N- to C-terminus: Proline--tRNA ligase (425 aa).

This sequence belongs to the class-II aminoacyl-tRNA synthetase family. ProS type 2 subfamily. Homodimer.

Its subcellular location is the cytoplasm. It catalyses the reaction tRNA(Pro) + L-proline + ATP = L-prolyl-tRNA(Pro) + AMP + diphosphate. Functionally, catalyzes the attachment of proline to tRNA(Pro) in a two-step reaction: proline is first activated by ATP to form Pro-AMP and then transferred to the acceptor end of tRNA(Pro). This Wolbachia sp. subsp. Brugia malayi (strain TRS) protein is Proline--tRNA ligase.